The primary structure comprises 370 residues: Protein SHI RELATED SEQUENCE 1 (370 aa).

The disordered stretch occupies residues 1 to 37; the sequence is MAGFFSLDGGGGGGGGGGNNQEDHRSNTNPPPPVSEA. Residues 8 to 19 show a composition bias toward gly residues; it reads DGGGGGGGGGGN. Residues C144, C147, C155, C160, C164, and C171 each coordinate Zn(2+). The zn(2)-C6 fungal-type; degenerate DNA-binding region spans 144–171; it reads CQDCGNQAKKDCSHMRCRTCCKSRGFEC. The Required for homo- and heterodimerization motif lies at 271–274; the sequence is IGGH.

This sequence belongs to the SHI protein family. As to quaternary structure, forms homodimers and heterodimers with LRP1. As to expression, expressed in flowers, seeds and seedlings.

The protein resides in the nucleus. Transcription activator that binds DNA on 5'-ACTCTAC-3' and promotes auxin homeostasis-regulating gene expression (e.g. YUC genes), as well as genes affecting stamen development, cell expansion and timing of flowering. Synergistically with other SHI-related proteins, regulates gynoecium, stamen and leaf development in a dose-dependent manner, controlling apical-basal patterning. Promotes style and stigma formation, and influences vascular development during gynoecium development. May also have a role in the formation and/or maintenance of the shoot apical meristem (SAM). This Arabidopsis thaliana (Mouse-ear cress) protein is Protein SHI RELATED SEQUENCE 1 (SRS1).